Consider the following 274-residue polypeptide: Orotidine 5'-phosphate decarboxylase (274 aa).

The active-site Proton donor is the lysine 96.

The protein belongs to the OMP decarboxylase family. Type 2 subfamily.

It catalyses the reaction orotidine 5'-phosphate + H(+) = UMP + CO2. It participates in pyrimidine metabolism; UMP biosynthesis via de novo pathway; UMP from orotate: step 2/2. This is Orotidine 5'-phosphate decarboxylase from Bacteroides fragilis (strain ATCC 25285 / DSM 2151 / CCUG 4856 / JCM 11019 / LMG 10263 / NCTC 9343 / Onslow / VPI 2553 / EN-2).